The chain runs to 211 residues: Uridine kinase (211 aa).

12-19 (GGSGSGKT) serves as a coordination point for ATP.

It belongs to the uridine kinase family.

The protein localises to the cytoplasm. It carries out the reaction uridine + ATP = UMP + ADP + H(+). The catalysed reaction is cytidine + ATP = CMP + ADP + H(+). It functions in the pathway pyrimidine metabolism; CTP biosynthesis via salvage pathway; CTP from cytidine: step 1/3. It participates in pyrimidine metabolism; UMP biosynthesis via salvage pathway; UMP from uridine: step 1/1. The polypeptide is Uridine kinase (Bacillus licheniformis (strain ATCC 14580 / DSM 13 / JCM 2505 / CCUG 7422 / NBRC 12200 / NCIMB 9375 / NCTC 10341 / NRRL NRS-1264 / Gibson 46)).